The sequence spans 226 residues: UPF0173 metal-dependent hydrolase GTNG_2675 (226 aa).

This sequence belongs to the UPF0173 family.

In Geobacillus thermodenitrificans (strain NG80-2), this protein is UPF0173 metal-dependent hydrolase GTNG_2675.